The chain runs to 91 residues: Potassium channel toxin BmTXK-beta-2 (91 aa).

The N-terminal stretch at 1–19 is a signal peptide; the sequence is MQRNLVVLLFLGMVALSSC. Positions 20–27 are excised as a propeptide; sequence GLREKHFQ. Positions 54 to 91 constitute a BetaSPN-type CS-alpha/beta domain; that stretch reads QFGCPAYQGYCDDHCQDIKKEEGFCHGFKCKCGIPMGF. 3 disulfide bridges follow: Cys57-Cys78, Cys64-Cys83, and Cys68-Cys85.

It belongs to the long chain scorpion toxin family. Class 1 subfamily. As to expression, expressed by the venom gland.

The protein localises to the secreted. Its function is as follows. Inhibits voltage-gated potassium channel. This chain is Potassium channel toxin BmTXK-beta-2, found in Olivierus martensii (Manchurian scorpion).